Consider the following 351-residue polypeptide: UPF0421 protein BC_2748 (351 aa).

4 consecutive transmembrane segments (helical) span residues 19-39 (IAVF…IFAV), 74-94 (FTFF…FTIV), 109-129 (TLTA…AFLI), and 131-151 (LATT…IFPP).

Belongs to the UPF0421 family.

The protein resides in the cell membrane. In Bacillus cereus (strain ATCC 14579 / DSM 31 / CCUG 7414 / JCM 2152 / NBRC 15305 / NCIMB 9373 / NCTC 2599 / NRRL B-3711), this protein is UPF0421 protein BC_2748.